The sequence spans 443 residues: Zinc finger protein 713 (443 aa).

Polar residues predominate over residues 1–10; sequence MPSQNAVFSQ. 2 disordered regions span residues 1 to 23 and 99 to 118; these read MPSQNAVFSQEGNMEEEEMNDGS and DTHPDGENRPEIKKSTTSQN. The KRAB domain occupies 32–102; the sequence is LTFQDVAVDF…ERDSLLDTHP (71 aa). Positions 99 to 112 are enriched in basic and acidic residues; sequence DTHPDGENRPEIKK. The C2H2-type 1; degenerate zinc-finger motif lies at 255-280; the sequence is HTAEKPSECGKAFSHTSSLSQPQMLL. 5 consecutive C2H2-type zinc fingers follow at residues 286–308, 314–336, 342–364, 370–392, and 398–420; these read YKCDECGKRFSQRIHLIQHQRIH, FICNGCGKAFRQHSSFTQHLRIH, YKCNQCGKAFSRITSLTEHHRLH, YECGFCGKAFSQRTHLNQHERTH, and YKCNECGKAFSQSAHLNQHRKIH.

This sequence belongs to the krueppel C2H2-type zinc-finger protein family. As to expression, expressed in fetal and adult brain.

It is found in the nucleus. In terms of biological role, may be involved in transcriptional regulation. This Homo sapiens (Human) protein is Zinc finger protein 713.